Here is a 310-residue protein sequence, read N- to C-terminus: Putative S-adenosyl-L-methionine-dependent methyltransferase MUL_2766 (310 aa).

S-adenosyl-L-methionine is bound by residues Asp131 and 160–161 (DL).

This sequence belongs to the UPF0677 family.

In terms of biological role, exhibits S-adenosyl-L-methionine-dependent methyltransferase activity. This is Putative S-adenosyl-L-methionine-dependent methyltransferase MUL_2766 from Mycobacterium ulcerans (strain Agy99).